The chain runs to 602 residues: MNKVVGIDLGTTNSVVAAIEGGQPTVITNAEGFRTTPSIVAYTKKQELLVGQLAKRQSVVNAENTFFSVKRFIGCKADEISEESKELPYKVIKDSNGNIKIKCSSLNKDFSPEEISAQVIRKLIADAKEYLGQDVTKAVITVPAYFNDSQRQATVDAGKIAGIEVLRIINEPTAASLAYGLDKKQNETILVFDLGGGTFDVSILEVGDGIFEVLSTAGDTNLGGDDFDKALVRWLVEDFEAKEGTNLTKDIQALQRLTEAAEKAKMELSNVEKTTINLPFITADKNGPKHIQQELTREKFESLCQDLINRCRIPVEKALKDAKLDQSGINEVVLVGGSTRIPAIQQLVESLTGKKPNKSVNPDEVVAIGAAIQAGILAGEITDILLLDVTPLSLGVETVGGIMTKLISRNTTIPVKKSELFSTAADNQTNVEIHVLQGEREVVSGNKSLGNFKLEGIPQAPKGKPQIEVTFDINVDGILSVTAKENESGKEQNVTIQGASNLSESEVNDMLEEAEKYAVIDKEQKEKSEMVVSATAYCDEVEKKLNSGEMGECTTEEEEEIKNVIKTLREALSSANYASIKESFEQLRTLTEVHLNSTNPAN.

The protein belongs to the heat shock protein 70 family.

The protein resides in the plastid. It is found in the chloroplast. In terms of biological role, acts as a chaperone. The polypeptide is Chaperone protein dnaK (Thalassiosira pseudonana (Marine diatom)).